We begin with the raw amino-acid sequence, 235 residues long: Orotidine 5'-phosphate decarboxylase (235 aa).

Residues aspartate 10, lysine 32, 59–68, threonine 123, arginine 184, glutamine 193, glycine 213, and arginine 214 contribute to the substrate site; that span reads DLKLHDIPNT. Lysine 61 functions as the Proton donor in the catalytic mechanism.

The protein belongs to the OMP decarboxylase family. Type 1 subfamily. In terms of assembly, homodimer.

The enzyme catalyses orotidine 5'-phosphate + H(+) = UMP + CO2. It participates in pyrimidine metabolism; UMP biosynthesis via de novo pathway; UMP from orotate: step 2/2. Functionally, catalyzes the decarboxylation of orotidine 5'-monophosphate (OMP) to uridine 5'-monophosphate (UMP). This is Orotidine 5'-phosphate decarboxylase from Paramagnetospirillum magneticum (strain ATCC 700264 / AMB-1) (Magnetospirillum magneticum).